Consider the following 286-residue polypeptide: Protein Bride of doubletime (286 aa).

As to quaternary structure, interacts with dco (via nuclear localization signal). Interacts with Ankrd49; interaction promotes the stability of both complex members.

It localises to the cytoplasm. Its subcellular location is the cytosol. The protein resides in the cell membrane. Functions in planar polarity establishment and circadian rhythms by promoting the activity and localization of dco/dbt. Required for regulating the levels of dco/dbt and per in the nuclei of photoreceptor cells and thereby is involved in normal oscillations of the circadian clock proteins in the eye. In the dark, the cry circadian and rhodopsin visual pathways, activate the accumulation of the protein into Arr1- and Arr2-dependent cytosolic foci which are required for dco localization to photoreceptor nuclei. It is possible that the accumulation into foci results in the dissociation of the protein from dco, thus allowing dco to interact with importins and microtubles for nuclear transport. By promoting nuclei localization and kinase activity of dco towards per, it is essential for regulating normal cycles of per nuclear accumulation in brain circadian neurons and thus is important for normal circadian behavior. Essential for regulating the establishment of planar cell polarity in the wing. Forms a complex with Ankrd49 which likely functions in the regulation of planar polarity by promoting the activity of dco during planar polarity establishment. Within the complex, directly promotes dco activity in regulating phosphorylation and asymmetric localization of core planar polarity proteins such as dsh. In Drosophila melanogaster (Fruit fly), this protein is Protein Bride of doubletime.